We begin with the raw amino-acid sequence, 78 residues long: Exodeoxyribonuclease 7 small subunit (78 aa).

The protein belongs to the XseB family. In terms of assembly, heterooligomer composed of large and small subunits.

It localises to the cytoplasm. The enzyme catalyses Exonucleolytic cleavage in either 5'- to 3'- or 3'- to 5'-direction to yield nucleoside 5'-phosphates.. In terms of biological role, bidirectionally degrades single-stranded DNA into large acid-insoluble oligonucleotides, which are then degraded further into small acid-soluble oligonucleotides. This Synechococcus sp. (strain JA-2-3B'a(2-13)) (Cyanobacteria bacterium Yellowstone B-Prime) protein is Exodeoxyribonuclease 7 small subunit.